Consider the following 137-residue polypeptide: ATP synthase epsilon chain, chloroplastic (137 aa).

This sequence belongs to the ATPase epsilon chain family. F-type ATPases have 2 components, CF(1) - the catalytic core - and CF(0) - the membrane proton channel. CF(1) has five subunits: alpha(3), beta(3), gamma(1), delta(1), epsilon(1). CF(0) has three main subunits: a, b and c.

The protein localises to the plastid. It localises to the chloroplast thylakoid membrane. Produces ATP from ADP in the presence of a proton gradient across the membrane. This chain is ATP synthase epsilon chain, chloroplastic, found in Hordeum vulgare (Barley).